A 222-amino-acid polypeptide reads, in one-letter code: Large ribosomal subunit protein uL4 (222 aa).

Positions 50–72 (TRGRSEVSHSTRKPFRQKGTGNA) are disordered.

This sequence belongs to the universal ribosomal protein uL4 family. As to quaternary structure, part of the 50S ribosomal subunit.

In terms of biological role, one of the primary rRNA binding proteins, this protein initially binds near the 5'-end of the 23S rRNA. It is important during the early stages of 50S assembly. It makes multiple contacts with different domains of the 23S rRNA in the assembled 50S subunit and ribosome. Its function is as follows. Forms part of the polypeptide exit tunnel. The sequence is that of Large ribosomal subunit protein uL4 from Chlamydia muridarum (strain MoPn / Nigg).